Reading from the N-terminus, the 540-residue chain is Solute carrier family 2, facilitated glucose transporter member 9 (540 aa).

The tract at residues 1 to 31 (MARKQNRNSKELGLVPLTDDTSHAGPPGPGR) is disordered. The Cytoplasmic segment spans residues 1–51 (MARKQNRNSKELGLVPLTDDTSHAGPPGPGRALLECDHLRSGVPGGRRRKD). Ser-9 carries the phosphoserine modification. Residues 52–72 (WSCSLLVASLAGAFGSSFLYG) traverse the membrane as a helical segment. Over 73-107 (YNLSVVNAPTPYIKAFYNESWERRHGRPIDPDTLT) the chain is Extracellular. Residue Asn-90 is glycosylated (N-linked (GlcNAc...) asparagine). A helical transmembrane segment spans residues 108 to 128 (LLWSVTVSIFAIGGLVGTLIV). Residues 129–140 (KMIGKVLGRKHT) are Cytoplasmic-facing. The helical transmembrane segment at 141–161 (LLANNGFAISAALLMACSLQA) threads the bilayer. Topologically, residues 162 to 171 (GAFEMLIVGR) are extracellular. The helical transmembrane segment at 172 to 192 (FIMGIDGGVALSVLPMYLSEI) threads the bilayer. The Cytoplasmic portion of the chain corresponds to 193-200 (SPKEIRGS). The helical transmembrane segment at 201 to 221 (LGQVTAIFICIGVFTGQLLGL) threads the bilayer. The Extracellular portion of the chain corresponds to 222–231 (PELLGKESTW). The chain crosses the membrane as a helical span at residues 232–252 (PYLFGVIVVPAVVQLLSLPFL). Residues 253 to 316 (PDSPRYLLLE…LLRAPYVRWQ (64 aa)) lie on the Cytoplasmic side of the membrane. The helical transmembrane segment at 317-337 (VVTVIVTMACYQLCGLNAIWF) threads the bilayer. The Extracellular segment spans residues 338–354 (YTNSIFGKAGIPPAKIP). The chain crosses the membrane as a helical span at residues 355-375 (YVTLSTGGIETLAAVFSGLVI). At 376–381 (EHLGRR) the chain is on the cytoplasmic side. The helical transmembrane segment at 382-402 (PLLIGGFGLMGLFFGTLTITL) threads the bilayer. The Extracellular portion of the chain corresponds to 403–415 (TLQDHAPWVPYLS). The chain crosses the membrane as a helical span at residues 416-436 (IVGILAIIASFCSGPGGIPFI). Residues 437 to 451 (LTGEFFQQSQRPAAF) are Cytoplasmic-facing. Residues 452–472 (IIAGTVNWLSNFAVGLLFPFI) traverse the membrane as a helical segment. The Extracellular segment spans residues 473-478 (QKSLDT). The helical transmembrane segment at 479–499 (YCFLVFATICITGAIYLYFVL) threads the bilayer. Topologically, residues 500–540 (PETKNRTYAEISQAFSKRNKAYPPEEKIDSAVTDGKINGRP) are cytoplasmic. Position 515 is a phosphoserine (Ser-515). The disordered stretch occupies residues 519-540 (KAYPPEEKIDSAVTDGKINGRP).

This sequence belongs to the major facilitator superfamily. Sugar transporter (TC 2.A.1.1) family. Glucose transporter subfamily. In terms of tissue distribution, most strongly expressed in basolateral membranes of proximal renal tubular cells, liver and placenta. Also detected in lung, blood leukocytes, heart skeletal muscle and chondrocytes from articular cartilage. Detected in kidney membrane (at protein level). As to expression, only detected in the apical membranes of polarized renal tubular cells and placenta. Detected in kidney membrane (at protein level).

The protein localises to the cell membrane. It localises to the basolateral cell membrane. It is found in the apical cell membrane. It carries out the reaction urate(out) = urate(in). Extracellular glucose and urate accelerate urate efflux. Intracellular urate, glucose and fructose accelerate urate influx. With respect to regulation, no effect of extracellular urate, glucose or fructose on urate efflux. Intracellular urate and fructose slightly accelerate urate influx. In terms of biological role, high-capacity urate transporter, which may play a role in the urate reabsorption by proximal tubules. May have a residual high-affinity, low-capacity glucose and fructose transporter activity. Transports urate at rates 45- to 60-fold faster than glucose. Does not transport galactose. May mediate small uptake of adenine but not of other nucleobases. The chain is Solute carrier family 2, facilitated glucose transporter member 9 from Homo sapiens (Human).